We begin with the raw amino-acid sequence, 161 residues long: NADH-quinone oxidoreductase subunit C (161 aa).

Belongs to the complex I 30 kDa subunit family. As to quaternary structure, NDH-1 is composed of 14 different subunits. Subunits NuoB, C, D, E, F, and G constitute the peripheral sector of the complex.

It localises to the cell inner membrane. The enzyme catalyses a quinone + NADH + 5 H(+)(in) = a quinol + NAD(+) + 4 H(+)(out). Its function is as follows. NDH-1 shuttles electrons from NADH, via FMN and iron-sulfur (Fe-S) centers, to quinones in the respiratory chain. The immediate electron acceptor for the enzyme in this species is believed to be ubiquinone. Couples the redox reaction to proton translocation (for every two electrons transferred, four hydrogen ions are translocated across the cytoplasmic membrane), and thus conserves the redox energy in a proton gradient. In Citrifermentans bemidjiense (strain ATCC BAA-1014 / DSM 16622 / JCM 12645 / Bem) (Geobacter bemidjiensis), this protein is NADH-quinone oxidoreductase subunit C.